Here is a 428-residue protein sequence, read N- to C-terminus: Histidine--tRNA ligase (428 aa).

It belongs to the class-II aminoacyl-tRNA synthetase family. In terms of assembly, homodimer.

Its subcellular location is the cytoplasm. It carries out the reaction tRNA(His) + L-histidine + ATP = L-histidyl-tRNA(His) + AMP + diphosphate + H(+). The polypeptide is Histidine--tRNA ligase (Ectopseudomonas mendocina (strain ymp) (Pseudomonas mendocina)).